The following is a 239-amino-acid chain: Probable transcriptional regulatory protein Bcer98_0465 (239 aa).

It belongs to the TACO1 family. YeeN subfamily.

It localises to the cytoplasm. The protein is Probable transcriptional regulatory protein Bcer98_0465 of Bacillus cytotoxicus (strain DSM 22905 / CIP 110041 / 391-98 / NVH 391-98).